Reading from the N-terminus, the 1010-residue chain is Retinoblastoma-related protein 1 (1010 aa).

The disordered stretch occupies residues 1 to 23 (MEGAAPPASSGSEVTGAGSGKVD). The segment at 419–619 (TPVSTAMTTA…EKGSSMYNSL (201 aa)) is domain A. Residues 419–861 (TPVSTAMTTA…NEVFIPTVKP (443 aa)) form a pocket region. The interval 620–730 (IVARPTLSAE…PAAGGELCAE (111 aa)) is spacer. The tract at residues 657–679 (LPPLPFQKQEHSPDKDEVRSPKR) is disordered. Residues 664-679 (KQEHSPDKDEVRSPKR) are compositionally biased toward basic and acidic residues. The tract at residues 731 to 861 (TGIGVFLSKI…NEVFIPTVKP (131 aa)) is domain B. Positions 868 to 898 (SGTSPNKKNEEKCAADGPYPESPRLSRFPNL) are disordered.

It belongs to the retinoblastoma protein (RB) family.

It is found in the nucleus. Its function is as follows. Regulator of biological processes that recruits a histone deacetylase to control gene transcription. May play a role in the entry into mitosis, negatively regulating the cell proliferation. Formation of stable complexes with geminiviridae replication-associated proteins may create a cellular environment which favors viral DNA replication. In Oryza sativa subsp. indica (Rice), this protein is Retinoblastoma-related protein 1 (RBR1).